A 188-amino-acid polypeptide reads, in one-letter code: Ribosome maturation factor RimM (188 aa).

In terms of domain architecture, PRC barrel spans 112–187 (SDSYYWVDLI…LLTLDWQSDW (76 aa)).

This sequence belongs to the RimM family. In terms of assembly, binds ribosomal protein uS19.

It localises to the cytoplasm. Functionally, an accessory protein needed during the final step in the assembly of 30S ribosomal subunit, possibly for assembly of the head region. Essential for efficient processing of 16S rRNA. May be needed both before and after RbfA during the maturation of 16S rRNA. It has affinity for free ribosomal 30S subunits but not for 70S ribosomes. The chain is Ribosome maturation factor RimM from Polynucleobacter asymbioticus (strain DSM 18221 / CIP 109841 / QLW-P1DMWA-1) (Polynucleobacter necessarius subsp. asymbioticus).